A 179-amino-acid polypeptide reads, in one-letter code: Sodium/potassium-transporting ATPase subunit beta-1-interacting protein 3 (179 aa).

Helical transmembrane passes span 5 to 22, 35 to 55, 62 to 82, and 151 to 171; these read TGRCTLVFICTLQMLVAL, APILGNFLHIIVVILGLFGTI, IVAYTIWTAFWVAWNVFIICF, and AVQILLSLIGFVYACYVISVI.

It belongs to the NKAIN family. As to quaternary structure, interacts with atp1b1 C-terminus.

It is found in the cell membrane. This is Sodium/potassium-transporting ATPase subunit beta-1-interacting protein 3 (nkain3) from Xenopus laevis (African clawed frog).